A 257-amino-acid chain; its full sequence is Adenylate kinase (257 aa).

Residue 51–56 (GAGKGT) participates in ATP binding. The interval 71–100 (ATGDMLRSQVAKKTELGKEAKKIMDQGGLV) is NMP. AMP-binding positions include T72, R77, 98–100 (GLV), 127–130 (GFPR), and Q134. The LID stretch occupies residues 168–205 (GRLVHPASGRSYHKIFNPPKQEMKDDITGEPLIQRSDD). ATP contacts are provided by residues R169 and 178–179 (SY). R202 and R213 together coordinate AMP. Q241 provides a ligand contact to ATP.

Belongs to the adenylate kinase family. AK2 subfamily. In terms of assembly, monomer.

Its subcellular location is the cytoplasm. It is found in the cytosol. It localises to the mitochondrion intermembrane space. It catalyses the reaction AMP + ATP = 2 ADP. Catalyzes the reversible transfer of the terminal phosphate group between ATP and AMP. Plays an important role in cellular energy homeostasis and in adenine nucleotide metabolism. Adenylate kinase activity is critical for regulation of the phosphate utilization and the AMP de novo biosynthesis pathways. This Aspergillus terreus (strain NIH 2624 / FGSC A1156) protein is Adenylate kinase (adk1).